Reading from the N-terminus, the 254-residue chain is 5'-nucleotidase SurE (254 aa).

A divalent metal cation is bound by residues Asp-8, Asp-9, Ser-39, and Asn-91.

This sequence belongs to the SurE nucleotidase family. A divalent metal cation serves as cofactor.

The protein localises to the cytoplasm. It carries out the reaction a ribonucleoside 5'-phosphate + H2O = a ribonucleoside + phosphate. Functionally, nucleotidase that shows phosphatase activity on nucleoside 5'-monophosphates. This is 5'-nucleotidase SurE from Methylibium petroleiphilum (strain ATCC BAA-1232 / LMG 22953 / PM1).